Here is a 99-residue protein sequence, read N- to C-terminus: NADH-quinone oxidoreductase subunit K (99 aa).

3 helical membrane-spanning segments follow: residues 3–23 (PTYY…GVLV), 28–48 (IVVF…LVTF), and 59–79 (VMAF…LAII).

This sequence belongs to the complex I subunit 4L family. NDH-1 is composed of 14 different subunits. Subunits NuoA, H, J, K, L, M, N constitute the membrane sector of the complex.

Its subcellular location is the cell membrane. It catalyses the reaction a quinone + NADH + 5 H(+)(in) = a quinol + NAD(+) + 4 H(+)(out). Functionally, NDH-1 shuttles electrons from NADH, via FMN and iron-sulfur (Fe-S) centers, to quinones in the respiratory chain. The immediate electron acceptor for the enzyme in this species is believed to be a menaquinone. Couples the redox reaction to proton translocation (for every two electrons transferred, four hydrogen ions are translocated across the cytoplasmic membrane), and thus conserves the redox energy in a proton gradient. The chain is NADH-quinone oxidoreductase subunit K from Saccharopolyspora erythraea (strain ATCC 11635 / DSM 40517 / JCM 4748 / NBRC 13426 / NCIMB 8594 / NRRL 2338).